The sequence spans 228 residues: Octanoyltransferase (228 aa).

The 181-residue stretch at 37-217 (AGGPDTLLLL…AVCDALDGRL (181 aa)) folds into the BPL/LPL catalytic domain. Substrate contacts are provided by residues 75-82 (RGGKITWH), 147-149 (AIG), and 160-162 (GFA). The Acyl-thioester intermediate role is filled by C178.

This sequence belongs to the LipB family.

The protein localises to the cytoplasm. It catalyses the reaction octanoyl-[ACP] + L-lysyl-[protein] = N(6)-octanoyl-L-lysyl-[protein] + holo-[ACP] + H(+). The protein operates within protein modification; protein lipoylation via endogenous pathway; protein N(6)-(lipoyl)lysine from octanoyl-[acyl-carrier-protein]: step 1/2. Catalyzes the transfer of endogenously produced octanoic acid from octanoyl-acyl-carrier-protein onto the lipoyl domains of lipoate-dependent enzymes. Lipoyl-ACP can also act as a substrate although octanoyl-ACP is likely to be the physiological substrate. In Mycolicibacterium smegmatis (strain ATCC 700084 / mc(2)155) (Mycobacterium smegmatis), this protein is Octanoyltransferase.